Reading from the N-terminus, the 228-residue chain is Urease accessory protein UreF (228 aa).

Belongs to the UreF family. As to quaternary structure, ureD, UreF and UreG form a complex that acts as a GTP-hydrolysis-dependent molecular chaperone, activating the urease apoprotein by helping to assemble the nickel containing metallocenter of UreC. The UreE protein probably delivers the nickel.

Its subcellular location is the cytoplasm. Its function is as follows. Required for maturation of urease via the functional incorporation of the urease nickel metallocenter. The chain is Urease accessory protein UreF from Prochlorococcus marinus (strain AS9601).